The primary structure comprises 350 residues: MAPPTVLVTGGAGYIGSHTVLEMLNAGYNVICVDNLCNAYSSGAKLPEALSRVQEITGKKVNFYRVDITDREQVRSVFQEHKIDMVAHFAALKAVGESCRIPLQYYHNNMTGTNVLLEAMADNNVFKFVYSSSATVYGEPKFLPVTEEHPTGNCTSPYGKTKYFTEEILKDLCKSDKRWAVVSLRYFNPVGAHISGRIGEDPNGEPNNLMPYIAQVAVGRRPSLSVYGSDFPTHDGTGVRDYIHIVDLAEGHVKALDKLRNIAETGFFAYNLGTGVGYSVLDMVKAFEKASGKKVNYTLVDRRSGDVATCYADATLADKKLGWKAERGIDKMCEDTWRWQSQNPNGYANK.

NAD(+)-binding positions include G13–I15, D34–N38, D67–I68, F89, and K93. A substrate-binding site is contributed by S133–T135. Y158 (proton acceptor) is an active-site residue. NAD(+) contacts are provided by K162 and Y186. Residues Y186–N188, N207–L209, S225–Y227, R240, and R303–D306 each bind substrate.

Belongs to the NAD(P)-dependent epimerase/dehydratase family. As to quaternary structure, homodimer. It depends on NAD(+) as a cofactor.

The catalysed reaction is UDP-alpha-D-glucose = UDP-alpha-D-galactose. The enzyme catalyses UDP-N-acetyl-alpha-D-glucosamine = UDP-N-acetyl-alpha-D-galactosamine. It participates in carbohydrate metabolism; galactose metabolism. Catalyzes two distinct but analogous reactions: the reversible epimerization of UDP-glucose to UDP-galactose and the reversible epimerization of UDP-N-acetylglucosamine to UDP-N-acetylgalactosamine. The reaction with UDP-Gal plays a critical role in the Leloir pathway of galactose catabolism in which galactose is converted to the glycolytic intermediate glucose 6-phosphate. It contributes to the catabolism of dietary galactose and enables the endogenous biosynthesis of both UDP-Gal and UDP-GalNAc when exogenous sources are limited. Both UDP-sugar interconversions are important in the synthesis of glycoproteins and glycolipids. The sequence is that of UDP-glucose 4-epimerase (Gale) from Drosophila melanogaster (Fruit fly).